We begin with the raw amino-acid sequence, 416 residues long: Orexin/Hypocretin receptor type 1 (416 aa).

The disordered stretch occupies residues 1-22; the sequence is MEPSATPGAQPGVPTSSGEPFH. The Extracellular portion of the chain corresponds to 1 to 46; the sequence is MEPSATPGAQPGVPTSSGEPFHLPPDYEDEFLRYLWRDYLYPKQYE. Residues 26–41 are required for response to orexin-A; sequence DYEDEFLRYLWRDYLY. Residues 47-67 form a helical membrane-spanning segment; that stretch reads WVLIAAYVAVFLIALVGNTLV. The Cytoplasmic segment spans residues 68-82; that stretch reads CLAVWRNHHMRTVTN. Residues 83–105 form a helical membrane-spanning segment; that stretch reads YFIVNLSLADVLVTAICLPASLL. The Extracellular portion of the chain corresponds to 106-119; that stretch reads VDITESWLFGHALC. Residues Cys-119 and Cys-202 are joined by a disulfide bond. The helical transmembrane segment at 120–140 threads the bilayer; it reads KVIPYLQAVSVSVAVLTLSFI. The Cytoplasmic segment spans residues 141-160; sequence ALDRWYAICHPLLFKSTARR. The helical transmembrane segment at 161–182 threads the bilayer; sequence ARGSILGIWAVSLAVMVPQAAV. The Extracellular portion of the chain corresponds to 183–213; the sequence is MECSSVLPELANRTRLFSVCDERWADELYPK. The N-linked (GlcNAc...) asparagine glycan is linked to Asn-194. The chain crosses the membrane as a helical span at residues 214–235; it reads IYHSCFFFVTYLAPLGLMGMAY. The Cytoplasmic portion of the chain corresponds to 236–298; the sequence is FQIFRKLWGP…QMRARRKTAK (63 aa). The chain crosses the membrane as a helical span at residues 299 to 321; the sequence is MLMVVLLVFALCYLPISVLNVLK. Over 322–336 the chain is Extracellular; it reads RVFGMFRQASDREAV. The chain crosses the membrane as a helical span at residues 337–360; that stretch reads YACFTFSHWLVYANSAANPIIYNF. At 361–416 the chain is on the cytoplasmic side; sequence LSGKFREQFKAAFSCCLPGLGPSSSARHKSLSLQSRCSVSKVSEHVVLTTVTTVLS.

This sequence belongs to the G-protein coupled receptor 1 family. Highly expressed in the brain in the prefrontal cortex, hippocampus, paraventricular thalamus, ventromedial hypothalamus, arcuate nucleus, dorsal raphe nucleus, and locus coeruleus. Not detected in the spleen, lung, liver, skeletal muscle, kidney and testis. Orexin receptor mRNA expression has also been reported in the adrenal gland, enteric nervous system, and pancreas.

It is found in the cell membrane. In terms of biological role, moderately selective excitatory receptor for orexin-A and, with a lower affinity, for orexin-B neuropeptide. Triggers an increase in cytoplasmic Ca(2+) levels in response to orexin-A binding. This is Orexin/Hypocretin receptor type 1 from Rattus norvegicus (Rat).